The following is a 115-amino-acid chain: Ribonuclease P protein component 4 (115 aa).

Cys66, Cys69, Cys96, and Cys99 together coordinate Zn(2+).

This sequence belongs to the eukaryotic/archaeal RNase P protein component 4 family. In terms of assembly, consists of a catalytic RNA component and at least 4-5 protein subunits. It depends on Zn(2+) as a cofactor.

The protein localises to the cytoplasm. The enzyme catalyses Endonucleolytic cleavage of RNA, removing 5'-extranucleotides from tRNA precursor.. Part of ribonuclease P, a protein complex that generates mature tRNA molecules by cleaving their 5'-ends. The protein is Ribonuclease P protein component 4 of Hyperthermus butylicus (strain DSM 5456 / JCM 9403 / PLM1-5).